We begin with the raw amino-acid sequence, 449 residues long: MTNANPDAFYIHTFGCQMNQADSGIMTAILQNEGYVAASNEADAGIVLLNTCAVREHATERVGHLLQHLHGRKKRSKGRLLVGVTGCIPQYEREVLFKNYPVVDFLAGPDTYRSLPLLIKQVQQAGKGATEAALAFNSAETYDGIEPVRSSSMSAFVPVMRGCNNHCAYCVVPLTRGRERSHPKAAVLNEVRQLAEAGYREITLLGQNVNSYYDPLAQCNFAELLAAVSCAAPATRIRFTTSHPKDISEALVRTIAEHSNICNHIHLPVQSGSSRILRLMQRGHTIEEYLEKIALIRSLIPNVTLSTDMIAGFCGETEADHQATLRLLEEVQFDSAFMFYYSPRPRTPAAEKLTDDVPEALKKARLQEIIECQNRISASLFSQAVGSVVEVLAEAESRRSSEQLMGRTAGNRTVVFARNGYQAGDVLHVRITGSTSATLLGEPLISTTL.

In terms of domain architecture, MTTase N-terminal spans 7-124 (DAFYIHTFGC…LPLLIKQVQQ (118 aa)). 6 residues coordinate [4Fe-4S] cluster: Cys-16, Cys-52, Cys-87, Cys-163, Cys-167, and Cys-170. A Radical SAM core domain is found at 149–379 (RSSSMSAFVP…IECQNRISAS (231 aa)). The TRAM domain occupies 382–445 (SQAVGSVVEV…SATLLGEPLI (64 aa)).

This sequence belongs to the methylthiotransferase family. MiaB subfamily. As to quaternary structure, monomer. It depends on [4Fe-4S] cluster as a cofactor.

It is found in the cytoplasm. The catalysed reaction is N(6)-dimethylallyladenosine(37) in tRNA + (sulfur carrier)-SH + AH2 + 2 S-adenosyl-L-methionine = 2-methylsulfanyl-N(6)-dimethylallyladenosine(37) in tRNA + (sulfur carrier)-H + 5'-deoxyadenosine + L-methionine + A + S-adenosyl-L-homocysteine + 2 H(+). Catalyzes the methylthiolation of N6-(dimethylallyl)adenosine (i(6)A), leading to the formation of 2-methylthio-N6-(dimethylallyl)adenosine (ms(2)i(6)A) at position 37 in tRNAs that read codons beginning with uridine. The protein is tRNA-2-methylthio-N(6)-dimethylallyladenosine synthase of Chlorobium chlorochromatii (strain CaD3).